Consider the following 433-residue polypeptide: MTILVLGINHKTASVALREKVAFSDEKRLLALKQIKQTQLAESAVILSTCNRTEVYLHNKNVGPQNDEVWLDSCVQWFADIHQVDLEELKSCLYSQQNLQASRHLMRVASGLDSLILGEPQILGQVKQAYQMSEEYYSLHSDIGMMSTELSRLFQKTFATAKRVRTETHIGESAVSVAYAACSLARQIFDSLRNLNILLVGAGETIELVSRHLLRHGVNGLAIANRTLSRAEKLVEKLETTQKIDIFSLDRLSEGLKRADIVITSTGSPHVLISRNLIEQAQQMRHYKPMLIVDIAVPRDVEESAGEIESVYHYTVDDLHNIIQYNINQREQASQQAEHIIQQESADFFEWLKVHQFSNLIRNYRESAEIIRQDLLEKALQALQNGENTEQVLQELSHKLTKKLIHQPTQAMQTMVKAGNTEGLQAFSHAVKF.

Residues 49-52 (TCNR), S114, 119-121 (EPQ), and Q125 each bind substrate. C50 serves as the catalytic Nucleophile. Residue 201 to 206 (GAGETI) coordinates NADP(+).

It belongs to the glutamyl-tRNA reductase family. In terms of assembly, homodimer.

It catalyses the reaction (S)-4-amino-5-oxopentanoate + tRNA(Glu) + NADP(+) = L-glutamyl-tRNA(Glu) + NADPH + H(+). It participates in porphyrin-containing compound metabolism; protoporphyrin-IX biosynthesis; 5-aminolevulinate from L-glutamyl-tRNA(Glu): step 1/2. In terms of biological role, catalyzes the NADPH-dependent reduction of glutamyl-tRNA(Glu) to glutamate 1-semialdehyde (GSA). The polypeptide is Glutamyl-tRNA reductase (Histophilus somni (strain 129Pt) (Haemophilus somnus)).